The sequence spans 224 residues: Envelope glycoprotein L (224 aa).

The N-terminal stretch at 1–19 (MGILGWVGLIAVGVLCVRG) is a signal peptide. Positions 20–161 (GLPSTEYVIR…FDYSRTRRCV (142 aa)) are interaction with gH. Positions 23-201 (STEYVIRSRV…LTTPPPIIAT (179 aa)) constitute a gL alphaherpesvirus-type domain. 2 cysteine pairs are disulfide-bonded: C44/C76 and C149/C160. Positions 161-224 (VGRQDLGPTN…RRRRPHSRRL (64 aa)) are disordered. Positions 213–224 (KSRRRRPHSRRL) are enriched in basic residues.

Belongs to the herpesviridae glycoprotein L (gL) family. Alphaherpesvirinae gL subfamily. As to quaternary structure, interacts with glycoprotein H (gH); this interaction is necessary for the correct processing and cell surface expression of gH. The heterodimer gH/gL seems to interact with gB trimers during fusion.

It localises to the virion membrane. The protein resides in the host cell membrane. It is found in the host Golgi apparatus. The protein localises to the host trans-Golgi network. Functionally, the heterodimer glycoprotein H-glycoprotein L is required for the fusion of viral and plasma membranes leading to virus entry into the host cell. Acts as a functional inhibitor of gH and maintains gH in an inhibited form. Upon binding to host integrins, gL dissociates from gH leading to activation of the viral fusion glycoproteins gB and gH. This chain is Envelope glycoprotein L, found in Human herpesvirus 1 (strain 17) (HHV-1).